The primary structure comprises 643 residues: Threonine--tRNA ligase (643 aa).

In terms of domain architecture, TGS spans 1–61 (MIKVTLKDGS…KEDVSLSICT (61 aa)). The catalytic stretch occupies residues 240–540 (DHNKLGRELK…LIEKYAGAFP (301 aa)). Zn(2+)-binding residues include C335, H386, and H517.

It belongs to the class-II aminoacyl-tRNA synthetase family. As to quaternary structure, homodimer. It depends on Zn(2+) as a cofactor.

The protein resides in the cytoplasm. The catalysed reaction is tRNA(Thr) + L-threonine + ATP = L-threonyl-tRNA(Thr) + AMP + diphosphate + H(+). In terms of biological role, catalyzes the attachment of threonine to tRNA(Thr) in a two-step reaction: L-threonine is first activated by ATP to form Thr-AMP and then transferred to the acceptor end of tRNA(Thr). Also edits incorrectly charged L-seryl-tRNA(Thr). This is Threonine--tRNA ligase from Clostridium botulinum (strain Eklund 17B / Type B).